The chain runs to 490 residues: MDLVTFLVLTLSSLILLSLWRQSCGRGSLPPGPTPFPIIGNFLQIDIKNVSQSLTNFSKAYGPVFTLYLGSRPTVVLHGYEAVKEALIDHGEEFSDRGSIPMVEKINNGLGIVFSNGNRWKEIRRFTLTTLRNLGMGKRNIEDRVQEEAQCLVEELRKTKGSPCDPTFILSCAPCNVICSIIFQDRFDYKDKDFLMLMEKLNENVKILSSPWLQVCNNFPLLIDYCPGSHHKVLKNVKYIRSYLLEKIKEHQESLDVTNPRDFIDYYLIKQKQANHIQQAEFSLENLACTINNLFAAGTETTSTTLRYALLLLMKYPDVTAKVQEEIDHVIGRHRSPCMQDRNHMPYTDAMIHEVQRFINLVPNNIPRAVTCDIKFRNYLIPKGTTVVTSLTSVLHDSKEFPNPELFDPGHFLDANGNFKKSDHFMPFSAGKRVCAGEGLARMELFLFLTTILQNFKLKSLVHPKDIDMIPFVNGLIALPPHYQVCIIPR.

A signal peptide spans Met-1–Gly-25. Residue Cys-435 coordinates heme.

This sequence belongs to the cytochrome P450 family. Requires heme as cofactor. In terms of tissue distribution, liver.

The protein resides in the endoplasmic reticulum membrane. It is found in the microsome membrane. It carries out the reaction an organic molecule + reduced [NADPH--hemoprotein reductase] + O2 = an alcohol + oxidized [NADPH--hemoprotein reductase] + H2O + H(+). The catalysed reaction is (5Z,8Z,11Z,14Z)-eicosatetraenoate + reduced [NADPH--hemoprotein reductase] + O2 = 11,12-epoxy-(5Z,8Z,14Z)-eicosatrienoate + oxidized [NADPH--hemoprotein reductase] + H2O + H(+). The enzyme catalyses (5Z,8Z,11Z,14Z)-eicosatetraenoate + reduced [NADPH--hemoprotein reductase] + O2 = 14,15-epoxy-(5Z,8Z,11Z)-eicosatrienoate + oxidized [NADPH--hemoprotein reductase] + H2O + H(+). The protein operates within lipid metabolism; arachidonate metabolism. A cytochrome P450 monooxygenase that primarily catalyzes the epoxidation of 11,12 and 14,15 double bonds of (5Z,8Z,11Z,14Z)-eicosatetraenoic acid (arachidonate) forming 11,12- and 14,15-epoxyeicosatrienoic acids (11,12- and 14,15-EET) regioisomers. Mechanistically, uses molecular oxygen inserting one oxygen atom into a substrate, and reducing the second into a water molecule, with two electrons provided by NADPH via cytochrome P450 reductase (CPR; NADPH--hemoprotein reductase). This Mus musculus (Mouse) protein is Cytochrome P450 2C39.